A 195-amino-acid chain; its full sequence is Probable nicotinate-nucleotide adenylyltransferase (195 aa).

The protein belongs to the NadD family.

The catalysed reaction is nicotinate beta-D-ribonucleotide + ATP + H(+) = deamido-NAD(+) + diphosphate. The protein operates within cofactor biosynthesis; NAD(+) biosynthesis; deamido-NAD(+) from nicotinate D-ribonucleotide: step 1/1. Catalyzes the reversible adenylation of nicotinate mononucleotide (NaMN) to nicotinic acid adenine dinucleotide (NaAD). The sequence is that of Probable nicotinate-nucleotide adenylyltransferase from Opitutus terrae (strain DSM 11246 / JCM 15787 / PB90-1).